Consider the following 676-residue polypeptide: UvrABC system protein B (676 aa).

The 389-residue stretch at 26–414 folds into the Helicase ATP-binding domain; the sequence is EGLDAGLAHQ…SAGEIADQVV (389 aa). An ATP-binding site is contributed by 39-46; that stretch reads GVTGSGKT. The short motif at 92–115 is the Beta-hairpin element; that stretch reads YYDYYQPEAYVPTTDTFIEKDSSV. Positions 432-598 constitute a Helicase C-terminal domain; that stretch reads QVDDLLSEIR…ALKRNIKDIM (167 aa). The region spanning 636-671 is the UVR domain; sequence EKEITKLEAQMYKHAQDLEFELAAQKRDEIEKLRQQ.

It belongs to the UvrB family. Forms a heterotetramer with UvrA during the search for lesions. Interacts with UvrC in an incision complex.

Its subcellular location is the cytoplasm. Functionally, the UvrABC repair system catalyzes the recognition and processing of DNA lesions. A damage recognition complex composed of 2 UvrA and 2 UvrB subunits scans DNA for abnormalities. Upon binding of the UvrA(2)B(2) complex to a putative damaged site, the DNA wraps around one UvrB monomer. DNA wrap is dependent on ATP binding by UvrB and probably causes local melting of the DNA helix, facilitating insertion of UvrB beta-hairpin between the DNA strands. Then UvrB probes one DNA strand for the presence of a lesion. If a lesion is found the UvrA subunits dissociate and the UvrB-DNA preincision complex is formed. This complex is subsequently bound by UvrC and the second UvrB is released. If no lesion is found, the DNA wraps around the other UvrB subunit that will check the other stand for damage. The chain is UvrABC system protein B from Vibrio vulnificus (strain CMCP6).